The chain runs to 140 residues: Large-conductance mechanosensitive channel (140 aa).

Helical transmembrane passes span 21 to 41 and 82 to 102; these read VGVI…GDVI and GSFI…FMMI.

Belongs to the MscL family. In terms of assembly, homopentamer.

The protein localises to the cell inner membrane. Its function is as follows. Channel that opens in response to stretch forces in the membrane lipid bilayer. May participate in the regulation of osmotic pressure changes within the cell. In Leptothrix cholodnii (strain ATCC 51168 / LMG 8142 / SP-6) (Leptothrix discophora (strain SP-6)), this protein is Large-conductance mechanosensitive channel.